The following is a 353-amino-acid chain: Heterogeneous nuclear ribonucleoproteins A2/B1 (353 aa).

Met1 bears the N-acetylmethionine mark. A Phosphothreonine modification is found at Thr4. The short motif at 9–15 (PLERKKR) is the Nuclear localization signal element. RRM domains lie at 21–104 (RKLF…ESGK) and 112–191 (KKLF…LSRQ). A Glycyl lysine isopeptide (Lys-Gly) (interchain with G-Cter in SUMO2) cross-link involves residue Lys22. Ser29 is subject to Phosphoserine. The residue at position 38 (Arg38) is an Omega-N-methylarginine. Ser85 carries the post-translational modification Phosphoserine. Lys104 carries the post-translational modification N6,N6-dimethyllysine; alternate. Residue Lys104 forms a Glycyl lysine isopeptide (Lys-Gly) (interchain with G-Cter in SUMO2); alternate linkage. Residues Lys112, Lys120, and Lys137 each participate in a glycyl lysine isopeptide (Lys-Gly) (interchain with G-Cter in SUMO2) cross-link. Thr140 carries the post-translational modification Phosphothreonine. Ser149 carries the post-translational modification Phosphoserine. Lys152 participates in a covalent cross-link: Glycyl lysine isopeptide (Lys-Gly) (interchain with G-Cter in SUMO2). At Thr159 the chain carries Phosphothreonine. Residues Lys168 and Lys173 each participate in a glycyl lysine isopeptide (Lys-Gly) (interchain with G-Cter in SUMO2); alternate cross-link. Lys168 and Lys173 each carry N6-acetyllysine; alternate. Thr176 is modified (phosphothreonine). A Glycyl lysine isopeptide (Lys-Gly) (interchain with G-Cter in SUMO2) cross-link involves residue Lys186. 2 positions are modified to phosphoserine: Ser189 and Ser201. A disordered region spans residues 193-353 (MQEVQSSRSG…SGGYGGRSRY (161 aa)). Over residues 202 to 223 (GRGGNFGFGDSRGGGGNFGPGP) the composition is skewed to gly residues. Arg203 is modified (asymmetric dimethylarginine; alternate). Arg203 is subject to Dimethylated arginine; alternate. An Omega-N-methylarginine; alternate modification is found at Arg203. Residue Ser212 is modified to Phosphoserine. An Asymmetric dimethylarginine; alternate modification is found at Arg213. Arg213 is modified (dimethylated arginine; alternate). The residue at position 213 (Arg213) is an Omega-N-methylarginine; alternate. The residue at position 225 (Ser225) is a Phosphoserine. Omega-N-methylarginine is present on Arg228. Phosphoserine occurs at positions 231 and 236. Arg238 carries the omega-N-methylarginine modification. Phosphoserine is present on Ser259. Arg266 bears the Asymmetric dimethylarginine; alternate mark. Arg266 carries the post-translational modification Omega-N-methylarginine; alternate. The interval 308–347 (QQPSNYGPMKSGNFGGSRNMGGPYGGGNYGPGGSGGSGGY) is nuclear targeting sequence. The span at 320 to 353 (NFGGSRNMGGPYGGGNYGPGGSGGSGGYGGRSRY) shows a compositional bias: gly residues. The residue at position 324 (Ser324) is a Phosphoserine. Arg325 carries the post-translational modification Omega-N-methylarginine. Tyr331 is subject to Phosphotyrosine. Phosphoserine is present on residues Ser341 and Ser344. Residue Tyr347 is modified to Phosphotyrosine. Arg350 carries the post-translational modification Omega-N-methylarginine.

In terms of assembly, homodimer; dimerization is required for nucleocytoplasmic translocation. Identified in the spliceosome C complex. Identified in a IGF2BP1-dependent mRNP granule complex containing untranslated mRNAs. Interacts with IGF2BP1. Interacts with C9orf72. Interacts with DGCR8. Interacts with TARDBP. Interacts with CKAP5. Interacts with TBK1. Interacts with STING1. Interacts with SRC. Interacts with PPIA/CYPA. Interacts (via C-terminus) with FAM76B; the interaction results in retention of HNRNPA2B1 in the nucleus and inhibition of the NF-kappa-B-mediated inflammatory pathway. Interacts with NF-kappa-B inhibitors NFKBIA and NFKBIE; the interaction may be mediated by the RRM2 domain of HNRNPA2B1, and HNRNPA2B1 may interact simultaneously with FAM76B and either NFKBIA or NFKBIE to form a complex. Post-translationally, asymmetric dimethylation at Arg-266 constitutes the major methylation site. According to a report, methylation affects subcellular location and promotes nuclear localization. According to another report, methylation at Arg-266 does not influence nucleocytoplasmic shuttling. Sumoylated in exosomes, promoting miRNAs-binding. In the brain, isoform A2 and isoform B1 are abundant in large ganglion-type neurons, such as Purkinje cells, and are less abundant in neighboring glia cells. Isoform A2 is more abundant than isoform B1 in brain. In testis, isoform A2 and isoform B1 are present in spermatogonia and spermatocytes, but not in spermatids or sperm. Isoform A2 is more abundant in the adrenal medulla than in the cortical cells. Isoform B1 is found in both adrenal medulla and cortical cells. Isoform A2 is more abundant than isoform B1 in the adrenal gland. Isoform A2 and isoform B1 are both detected in pancreas and kidney, and at lower levels in heart and lung. Isoform B1 is more abundant than isoform A2 in heart, lung and intestine (at protein level). Isoform A2b and isoform B1b are testis-specific.

The protein localises to the nucleus. The protein resides in the cytoplasm. Its subcellular location is the nucleoplasm. It localises to the cytoplasmic granule. It is found in the secreted. The protein localises to the extracellular exosome. Functionally, heterogeneous nuclear ribonucleoprotein (hnRNP) that associates with nascent pre-mRNAs, packaging them into hnRNP particles. The hnRNP particle arrangement on nascent hnRNA is non-random and sequence-dependent and serves to condense and stabilize the transcripts and minimize tangling and knotting. Packaging plays a role in various processes such as transcription, pre-mRNA processing, RNA nuclear export, subcellular location, mRNA translation and stability of mature mRNAs. Forms hnRNP particles with at least 20 other different hnRNP and heterogeneous nuclear RNA in the nucleus. Involved in transport of specific mRNAs to the cytoplasm in oligodendrocytes and neurons: acts by specifically recognizing and binding the A2RE (21 nucleotide hnRNP A2 response element) or the A2RE11 (derivative 11 nucleotide oligonucleotide) sequence motifs present on some mRNAs, and promotes their transport to the cytoplasm. Specifically binds single-stranded telomeric DNA sequences, protecting telomeric DNA repeat against endonuclease digestion. Also binds other RNA molecules, such as primary miRNA (pri-miRNAs): acts as a nuclear 'reader' of the N6-methyladenosine (m6A) mark by specifically recognizing and binding a subset of nuclear m6A-containing pri-miRNAs. Binding to m6A-containing pri-miRNAs promotes pri-miRNA processing by enhancing binding of DGCR8 to pri-miRNA transcripts. Involved in miRNA sorting into exosomes following sumoylation, possibly by binding (m6A)-containing pre-miRNAs. Acts as a regulator of efficiency of mRNA splicing, possibly by binding to m6A-containing pre-mRNAs. Plays a role in the splicing of pyruvate kinase PKM by binding repressively to sequences flanking PKM exon 9, inhibiting exon 9 inclusion and resulting in exon 10 inclusion and production of the PKM M2 isoform. Also plays a role in the activation of the innate immune response. Mechanistically, senses the presence of viral DNA in the nucleus, homodimerizes and is demethylated by JMJD6. In turn, translocates to the cytoplasm where it activates the TBK1-IRF3 pathway, leading to interferon alpha/beta production. The polypeptide is Heterogeneous nuclear ribonucleoproteins A2/B1 (Rattus norvegicus (Rat)).